Here is a 1714-residue protein sequence, read N- to C-terminus: Protein ESSENTIAL FOR POTEXVIRUS ACCUMULATION 1 (1714 aa).

Disordered stretches follow at residues 1 to 296 (MANS…PPHL) and 358 to 511 (IVSS…SKGE). Ser39 bears the Phosphoserine mark. The segment covering 58 to 75 (DPNQYGNHSDVVRTTGNG) has biased composition (polar residues). 2 stretches are compositionally biased toward basic and acidic residues: residues 96–136 (ESGR…DRWD) and 143–203 (GEQR…REKG). 2 stretches are compositionally biased toward polar residues: residues 230–244 (HNQS…SFSH) and 268–278 (IFTSAPNQSHP). Composition is skewed to basic and acidic residues over residues 389–422 (GSRE…EASH) and 430–441 (RGNEAPVRELKE). Residues 444–463 (MQGNAHVQSASPWRQSSGGE) show a composition bias toward polar residues. Residues 464–483 (RSNRNSHDWNDPSADSRLKS) are compositionally biased toward basic and acidic residues. The GYF domain maps to 546–597 (ELSLYYKDPQGLIQGPFSGSDIIGWFEAGYFGIDLLVRLASAPNDSPFSLLG). Disordered regions lie at residues 728–753 (ESAN…PSSD), 1092–1205 (VKNN…KPAP), and 1437–1566 (QEKM…GKKE). Residues 737-753 (ENVSENAQQPTRSPSSD) show a composition bias toward polar residues. Residues 1142 to 1162 (SEIKGKTKKSADTLIDNDTHL) show a composition bias toward basic and acidic residues. Polar residues predominate over residues 1163–1180 (IKSSTATASNTSQMSSEV). Residues 1467 to 1488 (ASWSRSASSPSQAVSQSSSQSK) are compositionally biased toward low complexity. A compositionally biased stretch (polar residues) spans 1515 to 1544 (LTSQNSWGTKNTPGKVNAGTSLNRQKSVSM).

As to quaternary structure, associates with eIF4E initiation factors and the ribosome complex, thus likely contributing to the proper translation of target proteins. Interacts directly with RPL18B and eIF4E1. Binds to SMG7. Quickly phosphorylated at Ser-39 after treatment of seedlings with the pathogen-associated molecular pattern (PAMP) flg22. Expressed in all tissues, mostly in flowers, leaves and stems, and, to a lower extent, in roots (at protein level).

The protein localises to the cytoplasm. It localises to the cytosol. The protein resides in the P-body. In terms of biological role, translational repressor involved in the negative regulation of immune receptor accumulation via the inhibition of nucleotide-binding leucine-rich repeat (NLR) receptor mediated defense. Represses NLR protein accumulation (e.g. SNC1, RPS4, RPM1 and RPS2). Together with SMG7, helps to restrict effector-triggered immunity (ETI) cell death induction during pathogen infection in a salicylic acid- (SA) and reactive oxygen species- (ROS) independent manner. Required for pathogen-associated molecular pattern (PAMP)-induced suppression of necrotrophic fungal (e.g. F.moniliforme) pathogen-derived mycotoxin-triggered (e.g. fumonisin B1) cell death. Functionally, (Microbial infection) Required for early steps of plantago asiatica mosaic virus (PlAMV, genus Potexvirus) infection. Facilitates pathogenic growth of avirulent hemi-biotrophic bacteria P.syringae pv. tomato (Pst) DC3000 (e.g. AvrRps4 and AvrRpm1) and of the compatible oomycete H.arabidopsidis Noco2. The chain is Protein ESSENTIAL FOR POTEXVIRUS ACCUMULATION 1 from Arabidopsis thaliana (Mouse-ear cress).